Consider the following 160-residue polypeptide: Ribosomal RNA large subunit methyltransferase H (160 aa).

Residues Leu77 and Gly109 each coordinate S-adenosyl-L-methionine.

It belongs to the RNA methyltransferase RlmH family. As to quaternary structure, homodimer.

It is found in the cytoplasm. It catalyses the reaction pseudouridine(1915) in 23S rRNA + S-adenosyl-L-methionine = N(3)-methylpseudouridine(1915) in 23S rRNA + S-adenosyl-L-homocysteine + H(+). Specifically methylates the pseudouridine at position 1915 (m3Psi1915) in 23S rRNA. The sequence is that of Ribosomal RNA large subunit methyltransferase H from Moorella thermoacetica (strain ATCC 39073 / JCM 9320).